Reading from the N-terminus, the 387-residue chain is 3-ketoacyl-CoA thiolase (387 aa).

C91 acts as the Acyl-thioester intermediate in catalysis. Residues H343 and C373 each act as proton acceptor in the active site.

The protein belongs to the thiolase-like superfamily. Thiolase family. In terms of assembly, heterotetramer of two alpha chains (FadB) and two beta chains (FadA).

Its subcellular location is the cytoplasm. It catalyses the reaction an acyl-CoA + acetyl-CoA = a 3-oxoacyl-CoA + CoA. It participates in lipid metabolism; fatty acid beta-oxidation. Its function is as follows. Catalyzes the final step of fatty acid oxidation in which acetyl-CoA is released and the CoA ester of a fatty acid two carbons shorter is formed. This Erwinia tasmaniensis (strain DSM 17950 / CFBP 7177 / CIP 109463 / NCPPB 4357 / Et1/99) protein is 3-ketoacyl-CoA thiolase.